Consider the following 692-residue polypeptide: Meiotic sister-chromatid recombination protein 6, mitochondrial (692 aa).

Residues Met-1 to Gln-30 constitute a mitochondrion transit peptide.

It is found in the mitochondrion. Its function is as follows. May be involved in the control of meiotic sister-chromatid recombination. The protein is Meiotic sister-chromatid recombination protein 6, mitochondrial (MSC6) of Saccharomyces cerevisiae (strain ATCC 204508 / S288c) (Baker's yeast).